The primary structure comprises 267 residues: Lyso-ornithine lipid O-acyltransferase (267 aa).

The chain crosses the membrane as a helical span at residues 7 to 27 (IFLVVAAMVALSLSLIPFQYL).

The protein belongs to the 1-acyl-sn-glycerol-3-phosphate acyltransferase family. OlsA subfamily.

It localises to the membrane. It catalyses the reaction a lyso-ornithine lipid + a fatty acyl-[ACP] = an N(2)-[(3R)-3-(acyloxy)acyl]-L-ornithine lipid + holo-[ACP]. It functions in the pathway lipid metabolism. Functionally, catalyzes the second step in the formation of ornithine lipids, which are phosphorus-free membrane lipids. Uses acyl-acyl carrier protein (acyl-AcpP) as an acyl donor and converts lyso-ornithine lipid (LOL) into ornithine lipid (OL). This Brucella abortus (strain 2308) protein is Lyso-ornithine lipid O-acyltransferase.